The sequence spans 321 residues: Phosphate acyltransferase (321 aa).

Belongs to the PlsX family. As to quaternary structure, homodimer. Probably interacts with PlsY.

The protein localises to the cytoplasm. The catalysed reaction is a fatty acyl-[ACP] + phosphate = an acyl phosphate + holo-[ACP]. It participates in lipid metabolism; phospholipid metabolism. Catalyzes the reversible formation of acyl-phosphate (acyl-PO(4)) from acyl-[acyl-carrier-protein] (acyl-ACP). This enzyme utilizes acyl-ACP as fatty acyl donor, but not acyl-CoA. In Chlamydia trachomatis serovar A (strain ATCC VR-571B / DSM 19440 / HAR-13), this protein is Phosphate acyltransferase.